The primary structure comprises 278 residues: DNA adenine methylase (278 aa).

S-adenosyl-L-methionine-binding residues include Trp-10, Lys-14, Asp-54, and Asp-181.

It belongs to the N(4)/N(6)-methyltransferase family.

The catalysed reaction is a 2'-deoxyadenosine in DNA + S-adenosyl-L-methionine = an N(6)-methyl-2'-deoxyadenosine in DNA + S-adenosyl-L-homocysteine + H(+). An alpha subtype methylase, recognizes the double-stranded sequence 5'-GATC-3' and methylates A-2. May be involved in methyl-directed DNA mismatch repair, initiation of chromosome replication and gene expression. In Escherichia coli O157:H7, this protein is DNA adenine methylase (dam).